The chain runs to 279 residues: Biotin synthase (279 aa).

Residues 1-228 (MKDIFLCSIC…SARLMIAGGR (228 aa)) enclose the Radical SAM core domain. Residues cysteine 17, cysteine 21, and cysteine 24 each contribute to the [4Fe-4S] cluster site. Residues cysteine 61, cysteine 96, cysteine 154, and arginine 221 each contribute to the [2Fe-2S] cluster site.

Belongs to the radical SAM superfamily. Biotin synthase family. In terms of assembly, homodimer. [4Fe-4S] cluster serves as cofactor. Requires [2Fe-2S] cluster as cofactor.

The enzyme catalyses (4R,5S)-dethiobiotin + (sulfur carrier)-SH + 2 reduced [2Fe-2S]-[ferredoxin] + 2 S-adenosyl-L-methionine = (sulfur carrier)-H + biotin + 2 5'-deoxyadenosine + 2 L-methionine + 2 oxidized [2Fe-2S]-[ferredoxin]. It functions in the pathway cofactor biosynthesis; biotin biosynthesis; biotin from 7,8-diaminononanoate: step 2/2. Functionally, catalyzes the conversion of dethiobiotin (DTB) to biotin by the insertion of a sulfur atom into dethiobiotin via a radical-based mechanism. The sequence is that of Biotin synthase from Wolinella succinogenes (strain ATCC 29543 / DSM 1740 / CCUG 13145 / JCM 31913 / LMG 7466 / NCTC 11488 / FDC 602W) (Vibrio succinogenes).